Here is a 150-residue protein sequence, read N- to C-terminus: Large ribosomal subunit protein bL9 (150 aa).

This sequence belongs to the bacterial ribosomal protein bL9 family.

Binds to the 23S rRNA. The chain is Large ribosomal subunit protein bL9 from Burkholderia vietnamiensis (strain G4 / LMG 22486) (Burkholderia cepacia (strain R1808)).